We begin with the raw amino-acid sequence, 447 residues long: tRNA modification GTPase MnmE (447 aa).

R24, E81, and K120 together coordinate (6S)-5-formyl-5,6,7,8-tetrahydrofolate. In terms of domain architecture, TrmE-type G spans G216–G371. N226 serves as a coordination point for K(+). GTP is bound by residues N226 to S231, T245 to T251, and D270 to G273. S230 is a Mg(2+) binding site. K(+) is bound by residues T245, I247, and T250. A Mg(2+)-binding site is contributed by T251. K447 provides a ligand contact to (6S)-5-formyl-5,6,7,8-tetrahydrofolate.

The protein belongs to the TRAFAC class TrmE-Era-EngA-EngB-Septin-like GTPase superfamily. TrmE GTPase family. As to quaternary structure, homodimer. Heterotetramer of two MnmE and two MnmG subunits. K(+) serves as cofactor.

The protein resides in the cytoplasm. Its function is as follows. Exhibits a very high intrinsic GTPase hydrolysis rate. Involved in the addition of a carboxymethylaminomethyl (cmnm) group at the wobble position (U34) of certain tRNAs, forming tRNA-cmnm(5)s(2)U34. In Ruthia magnifica subsp. Calyptogena magnifica, this protein is tRNA modification GTPase MnmE.